Consider the following 563-residue polypeptide: Choline transporter (563 aa).

Positions 1 to 25 (MSIRNDNASGGYMQPDQSSNASMHK) are disordered. Topologically, residues 1–57 (MSIRNDNASGGYMQPDQSSNASMHKRDLRVEEEIKPLDDMDSKGAVAADGEVHLRKS) are extracellular. N-linked (GlcNAc...) asparagine glycans are attached at residues Asn-7 and Asn-20. 2 positions are modified to phosphoserine: Ser-22 and Ser-42. Residues 58–78 (FSLWSILGVGFGLTNSWFGIS) form a helical membrane-spanning segment. At 79–87 (TSMVAGISS) the chain is on the cytoplasmic side. A helical membrane pass occupies residues 88–108 (GGPMMIVYGIIIVALISICIG). The Extracellular segment spans residues 109 to 182 (TSLGELSSAY…LTHPEFIPKR (74 aa)). Residues 183–203 (WHIFVCFELLHLFLMFFNCYG) traverse the membrane as a helical segment. At 204-205 (KS) the chain is on the cytoplasmic side. A helical membrane pass occupies residues 206–226 (LPIISSSSLYISLLSFFTITI). The Extracellular portion of the chain corresponds to 227–255 (TVLACSHGKFNDAKFVFATFNNETGWKNG). The N-linked (GlcNAc...) asparagine glycan is linked to Asn-248. The chain crosses the membrane as a helical span at residues 256–276 (GIAFIVGLINPAWSFSCLDCA). The Cytoplasmic portion of the chain corresponds to 277–293 (THMAFEVEKPERVIPIA). The chain crosses the membrane as a helical span at residues 294 to 314 (IMGTVAIGFVTSFCYVIAMFF). The Extracellular segment spans residues 315-342 (SIQDLDAVLSSTTGAPILDIYNQALGNK). Asn-341 is a glycosylation site (N-linked (GlcNAc...) asparagine). A helical transmembrane segment spans residues 343–363 (SGAIFLGCLILFTSFGCVIAC). The Cytoplasmic portion of the chain corresponds to 364-398 (HTWQARLCWSFARDNGLPLSRLWSQVNPHTGVPLN). Residues 399–417 (AHLMSCAWITLIGLLYLAS) traverse the membrane as a helical segment. Residues 418–426 (STAFQSLIT) are Extracellular-facing. A helical transmembrane segment spans residues 427–445 (GCIAFLLLSYIIPVICLLA). Over 446–465 (KKRNIAHGPFWLGKFGFFSN) the chain is Cytoplasmic. Residues 466–486 (IVLLGWTVFSVVFFSFPPVLP) traverse the membrane as a helical segment. Over 487 to 491 (VTKDN) the chain is Extracellular. A helical transmembrane segment spans residues 492–512 (MNYVCVVIVGYTAYSILYWKY). Residues 513-563 (KGKKEFHALEESENEQAEYSNNFDTIEDSREFSVAASDVELENEHVPWGKK) are Cytoplasmic-facing.

This sequence belongs to the amino acid-polyamine-organocation (APC) superfamily. Amino acid/choline transporter (ACT) (TC 2.A.3.4) family.

It is found in the membrane. It carries out the reaction choline(out) = choline(in). The catalysed reaction is ethanolamine(in) = ethanolamine(out). Functionally, sole choline transporter in yeast. Also transports ethanolamine. This Saccharomyces cerevisiae (strain ATCC 204508 / S288c) (Baker's yeast) protein is Choline transporter (HNM1).